Consider the following 291-residue polypeptide: Oligopeptide transport system permease protein OppC (291 aa).

6 helical membrane passes run 22–42 (VASLAALLLLFVSAYALPPLL), 85–105 (MLIGVCVAVISTGIAATVGAI), 116–136 (TLMWVVDLLLVVPSFILIAIV), 142–162 (NSANIMFLVLLLAGFGWMISS), 209–229 (ALNVAAAILAETGLSFLGFGI), and 247–267 (ATAFPWVFLFPASILVLILVC). The region spanning 81-272 (MQKSMLIGVC…LILVCANLTG (192 aa)) is the ABC transmembrane type-1 domain.

The protein belongs to the binding-protein-dependent transport system permease family. OppBC subfamily. In terms of assembly, the complex is composed of an ATP-binding protein (OppD), two transmembrane proteins (OppB and OppC) and a solute-binding protein (OppA).

The protein resides in the cell inner membrane. Its function is as follows. Part of the ABC transporter complex OppABCD involved in the uptake of oligopeptides. Responsible for the translocation of the substrate across the membrane. The polypeptide is Oligopeptide transport system permease protein OppC (Mycobacterium bovis (strain ATCC BAA-935 / AF2122/97)).